A 452-amino-acid chain; its full sequence is CUGBP Elav-like family member 3 (452 aa).

RRM domains follow at residues 7 to 88 (IKLF…PADS), 94 to 174 (RKLF…FADT), and 367 to 445 (CNIF…LKRP).

It belongs to the CELF/BRUNOL family.

The protein localises to the nucleus. The protein resides in the cytoplasm. In terms of biological role, RNA-binding protein that may be involved in the regulation of pre-mRNA alternative splicing. In Danio rerio (Zebrafish), this protein is CUGBP Elav-like family member 3 (celf3).